The chain runs to 961 residues: Ubiquitin carboxyl-terminal hydrolase 4 (961 aa).

One can recognise a DUSP domain in the interval 11 to 122; sequence PDVETQKTEL…GQQPIVRKVV (112 aa). Residues 27–216 form a necessary for interaction with SART3 region; it reads TLQRGAQWYL…LYQGQVLVIE (190 aa). Residues 133–141 carry the Nuclear export signal motif; the sequence is VEVYLLELK. The Ubiquitin-like 1 domain maps to 142 to 226; sequence LCENSDPTNV…PQNEDGTWPR (85 aa). The segment at 219 to 257 is disordered; the sequence is NEDGTWPRQTLQSKSSTAPSRNFTTSSKPSASPYSSMSA. Over residues 225 to 243 the composition is skewed to polar residues; sequence PRQTLQSKSSTAPSRNFTT. Residues 229 to 295 are required for USP4 activation by providing conformational flexibility between the DUSP and catalytic domains; that stretch reads LQSKSSTAPS…SYNCQEPPSP (67 aa). A compositionally biased stretch (low complexity) spans 244 to 257; the sequence is SSKPSASPYSSMSA. In terms of domain architecture, USP spans 302-921; it reads CGLGNLGNTC…AAYVLFYQRR (620 aa). Cys311 is a catalytic residue. Residues 384 to 386 are regulates ubiquitin dissociation; that stretch reads PQF. The segment at 405–407 is necessary for interaction with RBL2; that stretch reads LHE. Ser445 carries the post-translational modification Phosphoserine. The necessary for interaction with RB1 and RBL2 stretch occupies residues 459–463; it reads LVCPE. Zn(2+)-binding residues include Cys461 and Cys464. The region spanning 483–571 is the Ubiquitin-like 2 domain; it reads LKKDRIMEVF…IFVYEICTTP (89 aa). Residues 485 to 773 form an interacts with DUSP and ubiquitin-like 1 domains and is required for USP4 activation region; it reads KDRIMEVFLV…SQPQKKKKAA (289 aa). The interval 641-700 is disordered; sequence SSPLEPGACNGSRGSYEGDEEEMDHQEEGKEQLSEVEESGEDSQGGDPTETTQKAKGPPR. A phosphoserine mark is found at Ser655, Ser674, and Ser679. The Nuclear localization signal motif lies at 765-770; it reads QPQKKK. Positions 797 and 800 each coordinate Zn(2+). His879 is a catalytic residue. The tract at residues 924-961 is disordered; it reads ECPSTSSPVSFPGSDGGAKLSSSQQDLGEEEAYTMDTN. The span at 950–961 shows a compositional bias: acidic residues; the sequence is LGEEEAYTMDTN.

Belongs to the peptidase C19 family. USP4 subfamily. Interacts with RB1 (both dephosphorylated and hypophosphorylated forms). Interacts with RBL1 and RBL2. Interacts with ADORA2A (via cytoplasmic C-terminus); the interaction is direct. Interacts with SART3; recruits USP4 to its substrate PRPF3. In terms of processing, phosphorylated at Ser-445 by PKB/AKT1 in response to EGF stimulus, promoting its ability deubiquitinate RHEB. Monoubiquitinated by TRIM21. Ubiquitination does not lead to its proteasomal degradation. Autodeubiquitinated. In terms of tissue distribution, expressed in hippocampus and striatum (at protein level).

Its subcellular location is the cytoplasm. The protein localises to the nucleus. The catalysed reaction is Thiol-dependent hydrolysis of ester, thioester, amide, peptide and isopeptide bonds formed by the C-terminal Gly of ubiquitin (a 76-residue protein attached to proteins as an intracellular targeting signal).. Its activity is regulated as follows. The completion of the deubiquitinase reaction is mediated by the DUSP and ubiquitin-like 1 domains which promotes the release of ubiquitin from the catalytic site enabling subsequent reactions to occur. Functionally, deubiquitinating enzyme that removes conjugated ubiquitin from target proteins. Deubiquitinates PDPK1. Deubiquitinates TRIM21. Deubiquitinates receptor ADORA2A which increases the amount of functional receptor at the cell surface. Deubiquitinates HAS2. Deubiquitinates RHEB in response to EGF signaling, promoting mTORC1 signaling. May regulate mRNA splicing through deubiquitination of the U4 spliceosomal protein PRPF3. This may prevent its recognition by the U5 component PRPF8 thereby destabilizing interactions within the U4/U6.U5 snRNP. May also play a role in the regulation of quality control in the ER. The polypeptide is Ubiquitin carboxyl-terminal hydrolase 4 (Usp4) (Rattus norvegicus (Rat)).